Consider the following 213-residue polypeptide: Octanoyltransferase (213 aa).

One can recognise a BPL/LPL catalytic domain in the interval 35–213 (DKHGDAVLLL…ERHLPTLVGA (179 aa)). Residues 73–80 (RGGKITWH), 145–147 (AIG), and 158–160 (GFS) each bind substrate. The active-site Acyl-thioester intermediate is Cys176.

Belongs to the LipB family.

It localises to the cytoplasm. It catalyses the reaction octanoyl-[ACP] + L-lysyl-[protein] = N(6)-octanoyl-L-lysyl-[protein] + holo-[ACP] + H(+). It functions in the pathway protein modification; protein lipoylation via endogenous pathway; protein N(6)-(lipoyl)lysine from octanoyl-[acyl-carrier-protein]: step 1/2. In terms of biological role, catalyzes the transfer of endogenously produced octanoic acid from octanoyl-acyl-carrier-protein onto the lipoyl domains of lipoate-dependent enzymes. Lipoyl-ACP can also act as a substrate although octanoyl-ACP is likely to be the physiological substrate. The polypeptide is Octanoyltransferase (Salinispora arenicola (strain CNS-205)).